Reading from the N-terminus, the 141-residue chain is Putative pre-16S rRNA nuclease (141 aa).

Belongs to the YqgF nuclease family.

It is found in the cytoplasm. Could be a nuclease involved in processing of the 5'-end of pre-16S rRNA. The chain is Putative pre-16S rRNA nuclease from Coxiella burnetii (strain CbuK_Q154) (Coxiella burnetii (strain Q154)).